The following is a 384-amino-acid chain: MRWVLPDHIQDALPSEAASLEALRRRLLDAFRVRGYQLVMPPLLEYLDSLTTGAGQDLKLRTFKLVDQVSGRTMGVRADMTPQVTRIDAHLLNRAGVSRLCYCGSVLHTLPSTLTATREPLQLGAELYGHAGIDADIEIVRLLADVLRLAEVPASRIDIGHVGLFHALAALAGMVPEREEELFDLLQAKDVPGLKEITVGVAEPVRTALLRLPALYGGAEVIDEAAACMPESAEIRAALDDLRRLAAALEDLPISFDLADLRGYHYHSGVVFAAYGGGSPAALALGGRYDRVGEAFGRARPATGFSLDLRELALRLPAAVVPGAILAPLEGTAGLAAAVEALRAAGEAVMSRLPGHEGTWNDAGCDRQLVMRQGAWVVEPLQGE.

This sequence belongs to the class-II aminoacyl-tRNA synthetase family. HisZ subfamily. In terms of assembly, heteromultimer composed of HisG and HisZ subunits.

It is found in the cytoplasm. The protein operates within amino-acid biosynthesis; L-histidine biosynthesis; L-histidine from 5-phospho-alpha-D-ribose 1-diphosphate: step 1/9. Required for the first step of histidine biosynthesis. May allow the feedback regulation of ATP phosphoribosyltransferase activity by histidine. The protein is ATP phosphoribosyltransferase regulatory subunit of Azoarcus sp. (strain BH72).